A 354-amino-acid polypeptide reads, in one-letter code: 3-dehydroquinate synthase (354 aa).

NAD(+)-binding positions include 100–104 (GATGD), 124–125 (TT), Lys136, Lys145, and 163–166 (FLKT). Glu178, His242, and His256 together coordinate Zn(2+).

The protein belongs to the sugar phosphate cyclases superfamily. Dehydroquinate synthase family. The cofactor is NAD(+). It depends on Co(2+) as a cofactor. Zn(2+) serves as cofactor.

It localises to the cytoplasm. The catalysed reaction is 7-phospho-2-dehydro-3-deoxy-D-arabino-heptonate = 3-dehydroquinate + phosphate. The protein operates within metabolic intermediate biosynthesis; chorismate biosynthesis; chorismate from D-erythrose 4-phosphate and phosphoenolpyruvate: step 2/7. Catalyzes the conversion of 3-deoxy-D-arabino-heptulosonate 7-phosphate (DAHP) to dehydroquinate (DHQ). This chain is 3-dehydroquinate synthase, found in Staphylococcus aureus (strain COL).